The chain runs to 646 residues: UvrABC system protein B (646 aa).

The Helicase ATP-binding domain occupies 29–411 (LEKNPEKSKQ…SNQVVEQIIR (383 aa)). 42-49 (GVTGSGKT) is an ATP binding site. The short motif at 95–118 (YYDYYQPESYIPQKDQYIEKDAQI) is the Beta-hairpin element. One can recognise a Helicase C-terminal domain in the interval 428–590 (QVEDIIKETE…ITPQTIVKPI (163 aa)). Positions 609-644 (PNVIVELEAEMYEAAEALEFEKAIKIRDTIAKLKKK) constitute a UVR domain.

This sequence belongs to the UvrB family. Forms a heterotetramer with UvrA during the search for lesions. Interacts with UvrC in an incision complex.

The protein resides in the cytoplasm. Its function is as follows. The UvrABC repair system catalyzes the recognition and processing of DNA lesions. A damage recognition complex composed of 2 UvrA and 2 UvrB subunits scans DNA for abnormalities. Upon binding of the UvrA(2)B(2) complex to a putative damaged site, the DNA wraps around one UvrB monomer. DNA wrap is dependent on ATP binding by UvrB and probably causes local melting of the DNA helix, facilitating insertion of UvrB beta-hairpin between the DNA strands. Then UvrB probes one DNA strand for the presence of a lesion. If a lesion is found the UvrA subunits dissociate and the UvrB-DNA preincision complex is formed. This complex is subsequently bound by UvrC and the second UvrB is released. If no lesion is found, the DNA wraps around the other UvrB subunit that will check the other stand for damage. The chain is UvrABC system protein B from Methanococcus maripaludis (strain DSM 14266 / JCM 13030 / NBRC 101832 / S2 / LL).